The following is a 386-amino-acid chain: Probable protein phosphatase 2C 36 (386 aa).

Residues Glu-60–Ile-363 form the PPM-type phosphatase domain. Asp-94, Gly-95, Asp-295, and Asp-354 together coordinate Mn(2+).

It belongs to the PP2C family. Mg(2+) serves as cofactor. It depends on Mn(2+) as a cofactor.

The enzyme catalyses O-phospho-L-seryl-[protein] + H2O = L-seryl-[protein] + phosphate. It carries out the reaction O-phospho-L-threonyl-[protein] + H2O = L-threonyl-[protein] + phosphate. The chain is Probable protein phosphatase 2C 36 from Oryza sativa subsp. japonica (Rice).